The chain runs to 542 residues: Leucine-rich repeat-containing protein 56 (542 aa).

LRR repeat units lie at residues 94-115 (NLDQ…GTSL), 117-138 (HLQV…ASLP), 139-160 (ALKE…CLLE), 161-182 (QLEV…RYLQ), and 186-206 (RLAM…PGPT). Residues 207-250 (NKVPRGYNYRAEVRKLIPQLQVLDEVPAAHTGPPAPPRLSQDWL) enclose the LRRCT domain. Disordered stretches follow at residues 308–377 (LLSE…ADSS), 396–475 (LPYR…LQSR), and 507–542 (RLSP…PVPT). Basic and acidic residues predominate over residues 416–426 (RVPEEQVHQAE). Residues 522-532 (PDAAARPPRAA) show a composition bias toward low complexity.

This sequence belongs to the LRRC56 family. In terms of assembly, interacts with IFT88.

The protein resides in the cell projection. The protein localises to the cilium. Required for the assembly of dynein arms. In Homo sapiens (Human), this protein is Leucine-rich repeat-containing protein 56 (LRRC56).